The chain runs to 427 residues: Trigger factor (427 aa).

The PPIase FKBP-type domain occupies 163–248; that stretch reads GDTVILDFEG…LHEIKTKEVP (86 aa).

It belongs to the FKBP-type PPIase family. Tig subfamily.

It localises to the cytoplasm. The catalysed reaction is [protein]-peptidylproline (omega=180) = [protein]-peptidylproline (omega=0). Its function is as follows. Involved in protein export. Acts as a chaperone by maintaining the newly synthesized protein in an open conformation. Functions as a peptidyl-prolyl cis-trans isomerase. The polypeptide is Trigger factor (Listeria innocua serovar 6a (strain ATCC BAA-680 / CLIP 11262)).